The sequence spans 211 residues: Pyridoxine/pyridoxamine 5'-phosphate oxidase (211 aa).

Residues 7-10 and Lys65 contribute to the substrate site; that span reads RTDY. FMN-binding positions include 60–65, 75–76, Arg81, and Lys82; these read RILLIK and FT. Substrate is bound by residues Tyr122, Arg126, and Ser130. FMN contacts are provided by residues 139–140 and Trp183; that span reads QS. 189-191 is a substrate binding site; the sequence is RLH. Residue Arg193 participates in FMN binding.

This sequence belongs to the pyridoxamine 5'-phosphate oxidase family. Homodimer. Requires FMN as cofactor.

The catalysed reaction is pyridoxamine 5'-phosphate + O2 + H2O = pyridoxal 5'-phosphate + H2O2 + NH4(+). It catalyses the reaction pyridoxine 5'-phosphate + O2 = pyridoxal 5'-phosphate + H2O2. Its pathway is cofactor metabolism; pyridoxal 5'-phosphate salvage; pyridoxal 5'-phosphate from pyridoxamine 5'-phosphate: step 1/1. It participates in cofactor metabolism; pyridoxal 5'-phosphate salvage; pyridoxal 5'-phosphate from pyridoxine 5'-phosphate: step 1/1. In terms of biological role, catalyzes the oxidation of either pyridoxine 5'-phosphate (PNP) or pyridoxamine 5'-phosphate (PMP) into pyridoxal 5'-phosphate (PLP). This chain is Pyridoxine/pyridoxamine 5'-phosphate oxidase, found in Janthinobacterium sp. (strain Marseille) (Minibacterium massiliensis).